Reading from the N-terminus, the 117-residue chain is DNA-directed RNA polymerase subunit omega (117 aa).

A compositionally biased stretch (basic and acidic residues) spans 96-105 (KEEAEEEAKQ). A disordered region spans residues 96-117 (KEEAEEEAKQKNSRAAKAAAAE). The span at 108 to 117 (SRAAKAAAAE) shows a compositional bias: low complexity.

The protein belongs to the RNA polymerase subunit omega family. As to quaternary structure, the RNAP catalytic core consists of 2 alpha, 1 beta, 1 beta' and 1 omega subunit. When a sigma factor is associated with the core the holoenzyme is formed, which can initiate transcription.

The enzyme catalyses RNA(n) + a ribonucleoside 5'-triphosphate = RNA(n+1) + diphosphate. Functionally, promotes RNA polymerase assembly. Latches the N- and C-terminal regions of the beta' subunit thereby facilitating its interaction with the beta and alpha subunits. This Lactococcus lactis subsp. cremoris (strain MG1363) protein is DNA-directed RNA polymerase subunit omega.